The chain runs to 1166 residues: Pesticidal crystal protein Cry1Ga (1166 aa).

This sequence belongs to the delta endotoxin family.

Its function is as follows. Promotes colloidosmotic lysis by binding to the midgut epithelial cells of insects. This chain is Pesticidal crystal protein Cry1Ga (cry1Ga), found in Bacillus thuringiensis.